Here is a 234-residue protein sequence, read N- to C-terminus: Phosphoribosylaminoimidazole-succinocarboxamide synthase (234 aa).

It belongs to the SAICAR synthetase family.

It carries out the reaction 5-amino-1-(5-phospho-D-ribosyl)imidazole-4-carboxylate + L-aspartate + ATP = (2S)-2-[5-amino-1-(5-phospho-beta-D-ribosyl)imidazole-4-carboxamido]succinate + ADP + phosphate + 2 H(+). It participates in purine metabolism; IMP biosynthesis via de novo pathway; 5-amino-1-(5-phospho-D-ribosyl)imidazole-4-carboxamide from 5-amino-1-(5-phospho-D-ribosyl)imidazole-4-carboxylate: step 1/2. The polypeptide is Phosphoribosylaminoimidazole-succinocarboxamide synthase (Staphylococcus aureus (strain MRSA252)).